A 98-amino-acid chain; its full sequence is Citrate lyase acyl carrier protein (98 aa).

Ser14 carries the post-translational modification O-(phosphoribosyl dephospho-coenzyme A)serine.

It belongs to the CitD family. Oligomer with a subunit composition of (alpha,beta,gamma)6.

Its subcellular location is the cytoplasm. Covalent carrier of the coenzyme of citrate lyase. The chain is Citrate lyase acyl carrier protein from Escherichia coli O127:H6 (strain E2348/69 / EPEC).